The chain runs to 433 residues: ACT domain-containing protein ACR6 (433 aa).

4 ACT domains span residues 30–110 (VIQV…RSSV), 120–207 (SIEL…SCSD), 250–326 (VVTM…ASEG), and 328–402 (ELEL…VKKK).

Functionally, may bind amino acids. The protein is ACT domain-containing protein ACR6 of Arabidopsis thaliana (Mouse-ear cress).